The chain runs to 98 residues: Large ribosomal subunit protein uL23 (98 aa).

It belongs to the universal ribosomal protein uL23 family. Part of the 50S ribosomal subunit. Contacts protein L29, and trigger factor when it is bound to the ribosome.

In terms of biological role, one of the early assembly proteins it binds 23S rRNA. One of the proteins that surrounds the polypeptide exit tunnel on the outside of the ribosome. Forms the main docking site for trigger factor binding to the ribosome. The sequence is that of Large ribosomal subunit protein uL23 from Ruegeria pomeroyi (strain ATCC 700808 / DSM 15171 / DSS-3) (Silicibacter pomeroyi).